We begin with the raw amino-acid sequence, 225 residues long: Phosphoserine phosphatase (225 aa).

Met-1 is modified (N-acetylmethionine). Asp-20 functions as the Nucleophile in the catalytic mechanism. The Mg(2+) site is built by Asp-20 and Asp-22. 20 to 22 is a binding site for L-serine; that stretch reads DVD. The active-site Proton donor is Asp-22. Residue Met-52 participates in O-phospho-L-serine binding. Position 53 (Gly-53) interacts with phosphate. L-serine contacts are provided by residues 109-111 and Lys-158; that span reads SGG. Residues 109 to 111 and Lys-158 each bind O-phospho-L-serine; that span reads SGG. A Mg(2+)-binding site is contributed by Asp-179. Thr-182 contributes to the O-phospho-L-serine binding site. A phosphate-binding site is contributed by Thr-182.

The protein belongs to the HAD-like hydrolase superfamily. SerB family. In terms of assembly, homodimer. Mg(2+) serves as cofactor.

Its subcellular location is the cytoplasm. It localises to the cytosol. It catalyses the reaction O-phospho-L-serine + H2O = L-serine + phosphate. It carries out the reaction O-phospho-D-serine + H2O = D-serine + phosphate. Its pathway is amino-acid biosynthesis; L-serine biosynthesis; L-serine from 3-phospho-D-glycerate: step 3/3. In terms of biological role, catalyzes the last irreversible step in the biosynthesis of L-serine from carbohydrates, the dephosphorylation of O-phospho-L-serine to L-serine. L-serine can then be used in protein synthesis, to produce other amino acids, in nucleotide metabolism or in glutathione synthesis, or can be racemized to D-serine, a neuromodulator. May also act on O-phospho-D-serine. This Bos taurus (Bovine) protein is Phosphoserine phosphatase.